The following is a 235-amino-acid chain: Transcription factor hepR (235 aa).

The disordered stretch occupies residues 14–45 (QNSPESSRDVLSMASPGLLPIDPSPEHDETNK). The C2H2-type zinc finger occupies 175-205 (IQCPCLDERGERCSRMFSRLDNMRDHVRRIH).

It is found in the nucleus. Functionally, transcription factor; part of the gene cluster that mediates the biosynthesis of heptelidic acid (HA), a sesquiterpene lactone that acts as an inhibitor of glyceraldehyde-3-phosphatedehydrogenase (GAPDH) and a growth inhibitor of the salt-tolerant lactic acid bacteria in soy sauce brewing. Both hepR and hepS regulate the transcription of the heptelidic acid cluster, but they are not involved in mutual transcriptional regulation and act with different mechanisms. The protein is Transcription factor hepR of Aspergillus oryzae (strain ATCC 42149 / RIB 40) (Yellow koji mold).